The chain runs to 290 residues: Arginine and glutamate-rich protein 1 (290 aa).

Over residues 1 to 10 (MGSRSRTPSP) the composition is skewed to polar residues. 3 disordered regions span residues 1–137 (MGSR…AKEL), 193–216 (ERRREQIREEERRREEDEKQKREE), and 249–290 (MDEE…PGAL). Positions 12–28 (GKRRHHKSKHKKRSKSH) are enriched in basic residues. Basic and acidic residues-rich tracts occupy residues 29 to 44 (HDHERPSTRTDRDKSS) and 53 to 76 (RERDRDRERDRHRSDRHTERDYRH). Phosphoserine occurs at positions 77 and 79. Residues 88–99 (SSSSSDSQYSEQ) show a composition bias toward low complexity. Positions 111 to 269 (FKKLDEQNQM…QEKRVKEEQK (159 aa)) form a coiled coil. The segment covering 124-137 (RLAEMERQRRAKEL) has biased composition (basic and acidic residues). A compositionally biased stretch (basic and acidic residues) spans 249–269 (MDEERQRMRKEQEKRVKEEQK).

It belongs to the ARGLU1 family. Associates with the U1-snRNP complex; the interaction is enhanced by binding of Arglu1 to a stable intronic sequence RNA (sisRNA) produced from the Arglu1 gene by premature cleavage.

It localises to the nucleus. The protein localises to the nucleus speckle. Post-transcriptional regulator of gene expression; modulates splicing and premature cleavage at cryptic polyadenylation sites of its own pre-mRNA through binding and regulation of the U1-snRNP complex. In Drosophila melanogaster (Fruit fly), this protein is Arginine and glutamate-rich protein 1.